The sequence spans 395 residues: 8-amino-3,8-dideoxy-alpha-D-manno-octulosonate transaminase (395 aa).

At Lys186 the chain carries N6-(pyridoxal phosphate)lysine.

This sequence belongs to the DegT/DnrJ/EryC1 family. The cofactor is pyridoxal 5'-phosphate.

The catalysed reaction is 8-amino-3,8-dideoxy-alpha-D-manno-octulosonate + 2-oxoglutarate = 3,8-dideoxy-8-oxo-alpha-D-manno-octulosonate + L-glutamate. Its pathway is bacterial outer membrane biogenesis; lipopolysaccharide biosynthesis. Catalyzes the second (last) step of the biosynthesis of Kdo8N (8-amino-3,8-dideoxy-D-manno-octulosonate) from Kdo (3-deoxy-D-manno-octulosonate). The polypeptide is 8-amino-3,8-dideoxy-alpha-D-manno-octulosonate transaminase (Shewanella oneidensis (strain ATCC 700550 / JCM 31522 / CIP 106686 / LMG 19005 / NCIMB 14063 / MR-1)).